We begin with the raw amino-acid sequence, 305 residues long: MIRQRTLKEIVKTTGVGLHSGRKVTLTLRPAAANTGIVYRRTDVNPPVDFPADPASVRDTMLCTALVNDEGVRISTVEHLNAALAGMGIDNIIVEVDAPEIPIMDGSASPFVYLLQQAGVETLNAAKRFIRIKKPIRFEDGDKWAEFVPFNGFRMDFEIEFNHPAIESDEQHLLFDFSSQGFVKEISRARTFGFMRDIEYLQSQNLCLGGSFDCAIVLDEYRILNEEGLRFENEFVTHKVLDAIGDLYMCGHAIIGEFRAYKSGHGLNNQLLRAVLADAEAWEWATFEEEVGSPVAFAEPGMVLA.

The Zn(2+) site is built by H79, H238, and D242. H265 (proton donor) is an active-site residue.

This sequence belongs to the LpxC family. Zn(2+) is required as a cofactor.

The catalysed reaction is a UDP-3-O-[(3R)-3-hydroxyacyl]-N-acetyl-alpha-D-glucosamine + H2O = a UDP-3-O-[(3R)-3-hydroxyacyl]-alpha-D-glucosamine + acetate. The protein operates within glycolipid biosynthesis; lipid IV(A) biosynthesis; lipid IV(A) from (3R)-3-hydroxytetradecanoyl-[acyl-carrier-protein] and UDP-N-acetyl-alpha-D-glucosamine: step 2/6. Its function is as follows. Catalyzes the hydrolysis of UDP-3-O-myristoyl-N-acetylglucosamine to form UDP-3-O-myristoylglucosamine and acetate, the committed step in lipid A biosynthesis. This Vibrio atlanticus (strain LGP32) (Vibrio splendidus (strain Mel32)) protein is UDP-3-O-acyl-N-acetylglucosamine deacetylase.